The sequence spans 350 residues: Small ribosomal subunit biogenesis GTPase RsgA (350 aa).

Residues 1–17 show a composition bias toward polar residues; it reads MSKNKLSKGQQRRVNAN. The interval 1–33 is disordered; it reads MSKNKLSKGQQRRVNANHQRRLKTSKEKPDYDD. The CP-type G domain occupies 104 to 273; it reads TSVLTRPDFY…VIDSPGVREF (170 aa). Residues 160–163 and 214–222 each bind GTP; these read NKID and GQSGVGKSS. Residues Cys-297, Cys-302, His-304, and Cys-310 each coordinate Zn(2+).

The protein belongs to the TRAFAC class YlqF/YawG GTPase family. RsgA subfamily. Monomer. Associates with 30S ribosomal subunit, binds 16S rRNA. Zn(2+) serves as cofactor.

It is found in the cytoplasm. One of several proteins that assist in the late maturation steps of the functional core of the 30S ribosomal subunit. Helps release RbfA from mature subunits. May play a role in the assembly of ribosomal proteins into the subunit. Circularly permuted GTPase that catalyzes slow GTP hydrolysis, GTPase activity is stimulated by the 30S ribosomal subunit. The chain is Small ribosomal subunit biogenesis GTPase RsgA from Escherichia coli O6:H1 (strain CFT073 / ATCC 700928 / UPEC).